The primary structure comprises 350 residues: Nicotinate-nucleotide--dimethylbenzimidazole phosphoribosyltransferase (350 aa).

The active-site Proton acceptor is the E316.

It belongs to the CobT family.

The catalysed reaction is 5,6-dimethylbenzimidazole + nicotinate beta-D-ribonucleotide = alpha-ribazole 5'-phosphate + nicotinate + H(+). Its pathway is nucleoside biosynthesis; alpha-ribazole biosynthesis; alpha-ribazole from 5,6-dimethylbenzimidazole: step 1/2. In terms of biological role, catalyzes the synthesis of alpha-ribazole-5'-phosphate from nicotinate mononucleotide (NAMN) and 5,6-dimethylbenzimidazole (DMB). The sequence is that of Nicotinate-nucleotide--dimethylbenzimidazole phosphoribosyltransferase from Pseudomonas savastanoi pv. phaseolicola (strain 1448A / Race 6) (Pseudomonas syringae pv. phaseolicola (strain 1448A / Race 6)).